Here is a 192-residue protein sequence, read N- to C-terminus: tRNA (pseudouridine(54)-N(1))-methyltransferase (192 aa).

Residues leucine 114 and glycine 138 each coordinate S-adenosyl-L-methionine.

Belongs to the methyltransferase superfamily. TrmY family. Homodimer.

The protein resides in the cytoplasm. It catalyses the reaction pseudouridine(54) in tRNA + S-adenosyl-L-methionine = N(1)-methylpseudouridine(54) in tRNA + S-adenosyl-L-homocysteine + H(+). Functionally, specifically catalyzes the N1-methylation of pseudouridine at position 54 (Psi54) in tRNAs. The chain is tRNA (pseudouridine(54)-N(1))-methyltransferase from Aeropyrum pernix (strain ATCC 700893 / DSM 11879 / JCM 9820 / NBRC 100138 / K1).